We begin with the raw amino-acid sequence, 631 residues long: Mu-like prophage FluMu protein gp42 (631 aa).

A run of 2 helical transmembrane segments spans residues 56 to 76 (LGNI…TMVG) and 385 to 405 (GLAD…PVYV). Positions 425–453 (IEDGRDKDKKTQKKNKPPRPKRGRGSVRS) are disordered. Residues 434 to 449 (KTQKKNKPPRPKRGRG) are compositionally biased toward basic residues. Transmembrane regions (helical) follow at residues 455–475 (VAAV…VTTA), 495–515 (SKAV…TVLM), and 543–563 (ALIP…GWLG).

To phage Mu protein gp42.

The protein localises to the cell membrane. This is Mu-like prophage FluMu protein gp42 from Haemophilus influenzae (strain ATCC 51907 / DSM 11121 / KW20 / Rd).